The chain runs to 334 residues: uncharacterized protein (334 aa).

Position 126 (Ser126) interacts with substrate. Tyr151 serves as the catalytic Proton acceptor.

The protein belongs to the NAD(P)-dependent epimerase/dehydratase family. dTDP-glucose dehydratase subfamily.

This is an uncharacterized protein from Escherichia coli O111:H-.